Here is a 310-residue protein sequence, read N- to C-terminus: Nitric oxide synthase-interacting protein homolog (310 aa).

Polar residues predominate over residues F115–R124. The disordered stretch occupies residues F115–Q141.

Belongs to the NOSIP family.

It localises to the cytoplasm. It is found in the nucleus. Its function is as follows. Negatively regulates nitric oxide production by inducing nitric oxide synthase translocation to actin cytoskeleton and inhibiting its enzymatic activity. The chain is Nitric oxide synthase-interacting protein homolog from Caenorhabditis elegans.